We begin with the raw amino-acid sequence, 392 residues long: DNA-directed RNA polymerase subunit Rpo1C (392 aa).

This sequence belongs to the RNA polymerase beta' chain family. As to quaternary structure, part of the 13-subunit RNA polymerase complex.

It localises to the cytoplasm. It catalyses the reaction RNA(n) + a ribonucleoside 5'-triphosphate = RNA(n+1) + diphosphate. Its function is as follows. DNA-dependent RNA polymerase (RNAP) catalyzes the transcription of DNA into RNA using the four ribonucleoside triphosphates as substrates. Forms part of the jaw domain. The sequence is that of DNA-directed RNA polymerase subunit Rpo1C from Saccharolobus solfataricus (strain ATCC 35092 / DSM 1617 / JCM 11322 / P2) (Sulfolobus solfataricus).